Here is a 185-residue protein sequence, read N- to C-terminus: Homeobox expressed in ES cells 1 (185 aa).

The homeobox DNA-binding region spans 108–167; it reads GRRPRTAFTQNQIEVLENVFRVNCYPGIDIREDLAQKLNLEEDRIQIWFQNRRAKLKRSH.

It belongs to the ANF homeobox family. Can form heterodimers with PROP1 in binding to DNA. Interacts with TLE1.

It is found in the nucleus. Its function is as follows. Required for the normal development of the forebrain, eyes and other anterior structures such as the olfactory placodes and pituitary gland. Possible transcriptional repressor. Binds to the palindromic PIII sequence, 5'-AGCTTGAGTCTAATTGAATTAACTGTAC-3'. HESX1 and PROP1 bind as heterodimers on this palindromic site, and, in vitro, HESX1 can antagonize PROP1 activation. In Pan paniscus (Pygmy chimpanzee), this protein is Homeobox expressed in ES cells 1 (HESX1).